We begin with the raw amino-acid sequence, 214 residues long: Probable transaldolase (214 aa).

K83 serves as the catalytic Schiff-base intermediate with substrate.

Belongs to the transaldolase family. Type 3B subfamily.

It localises to the cytoplasm. The catalysed reaction is D-sedoheptulose 7-phosphate + D-glyceraldehyde 3-phosphate = D-erythrose 4-phosphate + beta-D-fructose 6-phosphate. It functions in the pathway carbohydrate degradation; pentose phosphate pathway; D-glyceraldehyde 3-phosphate and beta-D-fructose 6-phosphate from D-ribose 5-phosphate and D-xylulose 5-phosphate (non-oxidative stage): step 2/3. Transaldolase is important for the balance of metabolites in the pentose-phosphate pathway. In Maridesulfovibrio salexigens (strain ATCC 14822 / DSM 2638 / NCIMB 8403 / VKM B-1763) (Desulfovibrio salexigens), this protein is Probable transaldolase.